The following is a 449-amino-acid chain: PGL/p-HBAD biosynthesis rhamnosyltransferase (449 aa).

The protein belongs to the glycosyltransferase 28 family.

Its function is as follows. Catalyzes the transfer of the first rhamnosyl residue on p-hydroxybenzoic acid or phenolphthiocerol derivatives to form, after O-methylation at position 2 of the sugar unit, mono-O-methyl-glycosyl-p-hydroxybenzoic acid derivative (p-HBAD I) and 2-O-methyl-rhamnosyl-phenolphthiocerol dimycocerosate (also called mycoside B) during p-hydroxybenzoic acid derivatives (p-HBAD) and glycosylated phenolphthiocerol dimycocerosates (PGL) biosynthesis. This chain is PGL/p-HBAD biosynthesis rhamnosyltransferase, found in Mycobacterium bovis (strain BCG / Pasteur 1173P2).